Reading from the N-terminus, the 92-residue chain is Probable Fe(2+)-trafficking protein (92 aa).

The protein belongs to the Fe(2+)-trafficking protein family.

Functionally, could be a mediator in iron transactions between iron acquisition and iron-requiring processes, such as synthesis and/or repair of Fe-S clusters in biosynthetic enzymes. This Anaeromyxobacter sp. (strain Fw109-5) protein is Probable Fe(2+)-trafficking protein.